Consider the following 189-residue polypeptide: Peptidyl-tRNA hydrolase (189 aa).

Tyrosine 14 provides a ligand contact to tRNA. Residue histidine 19 is the Proton acceptor of the active site. TRNA-binding residues include tyrosine 64, asparagine 66, and asparagine 112.

This sequence belongs to the PTH family. As to quaternary structure, monomer.

The protein resides in the cytoplasm. The enzyme catalyses an N-acyl-L-alpha-aminoacyl-tRNA + H2O = an N-acyl-L-amino acid + a tRNA + H(+). Hydrolyzes ribosome-free peptidyl-tRNAs (with 1 or more amino acids incorporated), which drop off the ribosome during protein synthesis, or as a result of ribosome stalling. In terms of biological role, catalyzes the release of premature peptidyl moieties from peptidyl-tRNA molecules trapped in stalled 50S ribosomal subunits, and thus maintains levels of free tRNAs and 50S ribosomes. The protein is Peptidyl-tRNA hydrolase of Clostridium botulinum (strain Langeland / NCTC 10281 / Type F).